We begin with the raw amino-acid sequence, 406 residues long: Tyrosine-specific transport system 2 (406 aa).

Helical transmembrane passes span 7-27, 38-58, 83-103, 119-139, 150-170, 183-203, 219-239, 279-299, 314-334, 335-355, and 376-396; these read FGSA…AMPL, LLLL…FVEV, IFAT…YITG, AMSL…FVVV, VLFI…LPKV, AFVV…VIMA, AILI…LATH, VFSS…VFEG, FVLT…YPEG, FITA…ILPI, and NFAL…PFLI.

It belongs to the amino acid/polyamine transporter 2 family. Mtr/TnaB/TyrP permease subfamily.

Its subcellular location is the cell inner membrane. The enzyme catalyses L-tyrosine(in) + H(+)(in) = L-tyrosine(out) + H(+)(out). Functionally, transports tyrosine across the cytoplasmic membrane. The transport system is energized by the proton motive force. This is Tyrosine-specific transport system 2 (tyrP-B) from Haemophilus influenzae (strain ATCC 51907 / DSM 11121 / KW20 / Rd).